Consider the following 800-residue polypeptide: Leukocyte receptor cluster member 8 homolog (800 aa).

5 disordered regions span residues 118 to 149 (NYQS…MSYS), 175 to 229 (PCIQ…GFKF), 245 to 273 (SSEH…PQQQ), 335 to 394 (TIDW…GRGS), and 407 to 519 (KESS…HGHG). Low complexity-rich tracts occupy residues 120-131 (QSMSSQSGQHQG) and 184-201 (NQSN…SQQS). A compositionally biased stretch (polar residues) spans 252 to 261 (SAGQQQQQAT). A compositionally biased stretch (basic and acidic residues) spans 338 to 352 (WSREPLPGKDGGKES). Positions 360-387 (QTTLQTSHGSTITITQSPRGGGNSTNAA) are enriched in polar residues. Residues 409–418 (SSSSSSAGSR) show a composition bias toward low complexity. Basic residues-rich tracts occupy residues 419–433 (SRSR…RRYR) and 508–519 (EKRAARFQHGHG). The PCI domain occupies 636–800 (DHEEFNQCQA…KLSLAVLPNI (165 aa)).

The chain is Leukocyte receptor cluster member 8 homolog (leng8) from Xenopus laevis (African clawed frog).